A 429-amino-acid chain; its full sequence is Ribosomal RNA small subunit methyltransferase B (429 aa).

S-adenosyl-L-methionine is bound by residues 254 to 260 (CAAPGGK), Asp277, Asp303, and Asp322. The active-site Nucleophile is Cys375.

Belongs to the class I-like SAM-binding methyltransferase superfamily. RsmB/NOP family.

Its subcellular location is the cytoplasm. The enzyme catalyses cytidine(967) in 16S rRNA + S-adenosyl-L-methionine = 5-methylcytidine(967) in 16S rRNA + S-adenosyl-L-homocysteine + H(+). Its function is as follows. Specifically methylates the cytosine at position 967 (m5C967) of 16S rRNA. In Escherichia coli (strain UTI89 / UPEC), this protein is Ribosomal RNA small subunit methyltransferase B.